Consider the following 90-residue polypeptide: uncharacterized protein (90 aa).

A signal peptide spans 1–20 (MEKLFVLVFALTLLAFSSEA). Positions 31–50 (QLLRSRRQDRPSKPGFPDEP) are disordered.

It is found in the secreted. This is an uncharacterized protein from Rattus norvegicus (Rat).